The chain runs to 374 residues: Queuine tRNA-ribosyltransferase (374 aa).

The active-site Proton acceptor is the aspartate 89. Substrate contacts are provided by residues 89–93, aspartate 143, glutamine 187, and glycine 214; that span reads DSGGF. The interval 245-251 is RNA binding; that stretch reads GVGKPED. The active-site Nucleophile is aspartate 264. An RNA binding; important for wobble base 34 recognition region spans residues 269 to 273; the sequence is TRNAR. Zn(2+) is bound by residues cysteine 302, cysteine 304, cysteine 307, and histidine 333.

This sequence belongs to the queuine tRNA-ribosyltransferase family. Homodimer. Within each dimer, one monomer is responsible for RNA recognition and catalysis, while the other monomer binds to the replacement base PreQ1. The cofactor is Zn(2+).

The catalysed reaction is 7-aminomethyl-7-carbaguanine + guanosine(34) in tRNA = 7-aminomethyl-7-carbaguanosine(34) in tRNA + guanine. The protein operates within tRNA modification; tRNA-queuosine biosynthesis. In terms of biological role, catalyzes the base-exchange of a guanine (G) residue with the queuine precursor 7-aminomethyl-7-deazaguanine (PreQ1) at position 34 (anticodon wobble position) in tRNAs with GU(N) anticodons (tRNA-Asp, -Asn, -His and -Tyr). Catalysis occurs through a double-displacement mechanism. The nucleophile active site attacks the C1' of nucleotide 34 to detach the guanine base from the RNA, forming a covalent enzyme-RNA intermediate. The proton acceptor active site deprotonates the incoming PreQ1, allowing a nucleophilic attack on the C1' of the ribose to form the product. After dissociation, two additional enzymatic reactions on the tRNA convert PreQ1 to queuine (Q), resulting in the hypermodified nucleoside queuosine (7-(((4,5-cis-dihydroxy-2-cyclopenten-1-yl)amino)methyl)-7-deazaguanosine). The chain is Queuine tRNA-ribosyltransferase from Yersinia pseudotuberculosis serotype O:1b (strain IP 31758).